Consider the following 189-residue polypeptide: T cell receptor gamma constant 2 (189 aa).

An Ig-like domain is found at 10 to 104; it reads PKPTIFLPSI…NKNGIDQEII (95 aa). C32 and C88 form a disulfide bridge. 5 N-linked (GlcNAc...) asparagine glycosylation sites follow: N66, N120, N136, N142, and N151. Residues 155–177 form a helical membrane-spanning segment; it reads YYTYLLLLLKSVVYFAIITCCLL.

Gamma-delta TR is a heterodimer composed of a gamma and delta chain; disulfide-linked. The gamma-delta TR is associated with the transmembrane signaling CD3 coreceptor proteins following the stoichiometry: a single gamma-delta TR heterodimer associates with one CD3D-CD3E heterodimer, one CD3G-CD3E heterodimer and one CD247 homodimer forming a stable octameric structure. Upon activation, gamma-delta TR complex associates with FCER1G to initiate intracellular signaling.

The protein localises to the cell membrane. Its function is as follows. Constant region of T cell receptor (TR) gamma chain that participates in the antigen recognition. Gamma-delta TRs recognize a variety of self and foreign non-peptide antigens frequently expressed at the epithelial boundaries between the host and external environment, including endogenous lipids presented by MH-like protein CD1D and phosphoantigens presented by butyrophilin-like molecule BTN3A1. Upon antigen recognition induces rapid, innate-like immune responses involved in pathogen clearance and tissue repair. Binding of gamma-delta TR complex to antigen triggers phosphorylation of immunoreceptor tyrosine-based activation motifs (ITAMs) in the CD3 chains by the LCK and FYN kinases, allowing the recruitment, phosphorylation, and activation of ZAP70 that facilitates phosphorylation of the scaffolding proteins LCP2 and LAT. This lead to the formation of a supramolecular signalosome that recruits the phospholipase PLCG1, resulting in calcium mobilization and ERK activation, ultimately leading to T cell expansion and differentiation into effector cells. Gamma-delta TRs are produced through somatic rearrangement of a limited repertoire of variable (V), diversity (D), and joining (J) genes. The potential diversity of gamma-delta TRs is conferred by the unique ability to rearrange (D) genes in tandem and to utilize all three reading frames. The combinatorial diversity is considerably increased by the sequence exonuclease trimming and random nucleotide (N) region additions which occur during the V-(D)-J rearrangements. The chain is T cell receptor gamma constant 2 from Homo sapiens (Human).